The following is a 121-amino-acid chain: Heme-degrading monooxygenase (121 aa).

Residues 2 to 101 (IIVTNTIKVE…EQREDRKGIV (100 aa)) form the ABM domain. Fe cation is bound at residue asparagine 6. The disordered stretch occupies residues 76–98 (KSDSFKKAHGRTKDTREQREDRK). The span at 78–98 (DSFKKAHGRTKDTREQREDRK) shows a compositional bias: basic and acidic residues. Histidine 84 lines the heme pocket.

It belongs to the antibiotic biosynthesis monooxygenase family. Heme-degrading monooxygenase IsdG subfamily. In terms of assembly, homodimer.

The protein resides in the cytoplasm. The enzyme catalyses heme b + 3 reduced [NADPH--hemoprotein reductase] + 3 O2 = biliverdin IXalpha + CO + Fe(2+) + 3 oxidized [NADPH--hemoprotein reductase] + 3 H2O + H(+). In terms of biological role, allows bacterial pathogens to use the host heme as an iron source. Catalyzes the oxidative degradation of the heme macrocyclic porphyrin ring to the biliverdin in the presence of a suitable electron donor such as ascorbate or NADPH--cytochrome P450 reductase, with subsequent release of free iron. The protein is Heme-degrading monooxygenase of Listeria innocua serovar 6a (strain ATCC BAA-680 / CLIP 11262).